Consider the following 162-residue polypeptide: ATP synthase subunit b (162 aa).

The chain crosses the membrane as a helical span at residues 6 to 25 (TLFTLVTFLVLMLAVGKVAW).

Belongs to the ATPase B chain family. F-type ATPases have 2 components, F(1) - the catalytic core - and F(0) - the membrane proton channel. F(1) has five subunits: alpha(3), beta(3), gamma(1), delta(1), epsilon(1). F(0) has three main subunits: a(1), b(2) and c(10-14). The alpha and beta chains form an alternating ring which encloses part of the gamma chain. F(1) is attached to F(0) by a central stalk formed by the gamma and epsilon chains, while a peripheral stalk is formed by the delta and b chains.

Its subcellular location is the cell membrane. F(1)F(0) ATP synthase produces ATP from ADP in the presence of a proton or sodium gradient. F-type ATPases consist of two structural domains, F(1) containing the extramembraneous catalytic core and F(0) containing the membrane proton channel, linked together by a central stalk and a peripheral stalk. During catalysis, ATP synthesis in the catalytic domain of F(1) is coupled via a rotary mechanism of the central stalk subunits to proton translocation. Its function is as follows. Component of the F(0) channel, it forms part of the peripheral stalk, linking F(1) to F(0). In Lacticaseibacillus casei (strain BL23) (Lactobacillus casei), this protein is ATP synthase subunit b.